The chain runs to 164 residues: UPF0304 protein ESA_00925 (164 aa).

The protein belongs to the UPF0304 family.

In Cronobacter sakazakii (strain ATCC BAA-894) (Enterobacter sakazakii), this protein is UPF0304 protein ESA_00925.